The chain runs to 550 residues: Beta-fructofuranosidase, insoluble isoenzyme CWINV6 (550 aa).

Residues Trp-28–Asp-31, Gln-47, Trp-92–Ser-93, Arg-157–Asp-158, and Glu-214 each bind substrate. Asp-31 is a catalytic residue. Residues Asn-235 and Asn-272 are each glycosylated (N-linked (GlcNAc...) asparagine).

This sequence belongs to the glycosyl hydrolase 32 family. As to expression, expressed in seedlings and leaves, and, to a lower extent, in flowers and seeds.

It is found in the secreted. It localises to the extracellular space. The protein resides in the apoplast. Its subcellular location is the cell wall. The enzyme catalyses Hydrolysis of terminal, non-reducing (2-&gt;1)- and (2-&gt;6)-linked beta-D-fructofuranose residues in fructans.. In terms of biological role, 6 and 1-fructan exohydrolase that can degrade both inulin and levan-type fructans, such as phlein, levan, neokestose, levanbiose, 6-kestose, 1-kestose, inulin, and 1,1-nystose. This Arabidopsis thaliana (Mouse-ear cress) protein is Beta-fructofuranosidase, insoluble isoenzyme CWINV6 (CWINV6).